Reading from the N-terminus, the 171-residue chain is Myosin regulatory light chain 12B (171 aa).

T18 is modified (phosphothreonine; by MLCK and ZIPK/DAPK3). S19 carries the post-translational modification Phosphoserine; by MLCK and ZIPK/DAPK3. EF-hand domains lie at 28–63, 97–132, and 133–168; these read SQIQEFKEAFNMIDQNRDGFIDKEDLHDMLASLGKN, DPEDVIRNAFACFDEEATGTIQEDYLRELLTTMGDR, and FTDEEVDELYREAPIDKKGNFNYIEFTRILKHGAKD. Residues D41, N43, D45, and D52 each coordinate Ca(2+).

As to quaternary structure, myosin is a hexamer of 2 heavy chains and 4 light chains: interacts with myosin heavy chain MYO19. Phosphorylation increases the actin-activated myosin ATPase activity and thereby regulates the contractile activity. It is required to generate the driving force in the migration of the cells but not necessary for localization of myosin-2 at the leading edge. Phosphorylation is reduced following epigallocatechin-3-O-gallate treatment.

Myosin regulatory subunit that plays an important role in regulation of both smooth muscle and nonmuscle cell contractile activity via its phosphorylation. Phosphorylation triggers actin polymerization in vascular smooth muscle. Implicated in cytokinesis, receptor capping, and cell locomotion. The sequence is that of Myosin regulatory light chain 12B (MYL12B) from Bos taurus (Bovine).